Consider the following 237-residue polypeptide: Sugar fermentation stimulation protein homolog (237 aa).

This sequence belongs to the SfsA family.

This is Sugar fermentation stimulation protein homolog from Pseudomonas savastanoi pv. phaseolicola (strain 1448A / Race 6) (Pseudomonas syringae pv. phaseolicola (strain 1448A / Race 6)).